The following is a 185-amino-acid chain: Elongation factor P (185 aa).

The protein belongs to the elongation factor P family.

Its subcellular location is the cytoplasm. It participates in protein biosynthesis; polypeptide chain elongation. Functionally, involved in peptide bond synthesis. Stimulates efficient translation and peptide-bond synthesis on native or reconstituted 70S ribosomes in vitro. Probably functions indirectly by altering the affinity of the ribosome for aminoacyl-tRNA, thus increasing their reactivity as acceptors for peptidyl transferase. The sequence is that of Elongation factor P from Dictyoglomus thermophilum (strain ATCC 35947 / DSM 3960 / H-6-12).